The primary structure comprises 210 residues: MIYIVALTGGICSGKTTVSDRFKKIGINVIDTDVIGRKIIEKNKKISDSIKKKFGKKILNKDNSINRFLLRNCIFNEKKSRLWLENILHPEILKKSKKKIKLIQSTWCLWVVPLLFEKKIQKKANRILLIDTPIRIQIRRMIKRDKININEAKKIISYQVRRKKRISLSDDIILNKNKNIEKLSLYIHYLNNFYIYLSKQNNPKNMKKII.

One can recognise a DPCK domain in the interval 4-201 (IVALTGGICS…NFYIYLSKQN (198 aa)). 12–17 (CSGKTT) contacts ATP.

It belongs to the CoaE family.

It localises to the cytoplasm. The catalysed reaction is 3'-dephospho-CoA + ATP = ADP + CoA + H(+). It participates in cofactor biosynthesis; coenzyme A biosynthesis; CoA from (R)-pantothenate: step 5/5. Catalyzes the phosphorylation of the 3'-hydroxyl group of dephosphocoenzyme A to form coenzyme A. This chain is Dephospho-CoA kinase, found in Buchnera aphidicola subsp. Schizaphis graminum (strain Sg).